A 358-amino-acid chain; its full sequence is Probable D-xylulose reductase A (358 aa).

The Zn(2+) site is built by C47, H72, and E73. 182–187 (GAGPVG) contacts NAD(+).

This sequence belongs to the zinc-containing alcohol dehydrogenase family. Requires Zn(2+) as cofactor.

It carries out the reaction xylitol + NAD(+) = D-xylulose + NADH + H(+). The protein operates within carbohydrate degradation; L-arabinose degradation via L-arabinitol; D-xylulose 5-phosphate from L-arabinose (fungal route): step 4/5. Its function is as follows. Xylitol dehydrogenase which catalyzes the conversion of xylitol to D-xylulose. Xylose is a major component of hemicelluloses such as xylan. Most fungi utilize D-xylose via three enzymatic reactions, xylose reductase (XR), xylitol dehydrogenase (XDH), and xylulokinase, to form xylulose 5-phosphate, which enters pentose phosphate pathway. This is Probable D-xylulose reductase A (xdhA) from Aspergillus niger (strain ATCC MYA-4892 / CBS 513.88 / FGSC A1513).